Reading from the N-terminus, the 440-residue chain is MRLSRYFLPILREVPKEAEIVSHRLMLRAGMIRQESAGIYAWLPFGLRVLNKVCNIIREEQNRSGAIEMLMPTIQSADLWRESGRYDDYGKEMLRIKDRHEREMLFGPTNEEMITEIVRAYVKSYKALPLNLYHIQWKFRDEVRPRFGVYRSREFLMKDAYSFDLDAAGARHSYNKMFVAYLRTFARMGLKAIPMVADTGPIGGNLSHEFIILASTGESEVFCHGDYLEMAPPSADVNFDDAAGLQSVFDRWTELYAATSEKHDEAAFAAIPEASRMAARGIEVGHIFYFGTKYSEPFGAKVLGADGAEHTIHMGSYGIGPSRLVAAMIEASHDDNGIIWPDAVAPFQVGILNLKAGDSTTGAACEKLYAELTAAGYDVLYDDTEERAGAKFATADLIGLPWQILVGPKGLADGKVELKRRVDGSRELIAPGDILERLKA.

It belongs to the class-II aminoacyl-tRNA synthetase family. ProS type 2 subfamily. As to quaternary structure, homodimer.

It localises to the cytoplasm. The catalysed reaction is tRNA(Pro) + L-proline + ATP = L-prolyl-tRNA(Pro) + AMP + diphosphate. Catalyzes the attachment of proline to tRNA(Pro) in a two-step reaction: proline is first activated by ATP to form Pro-AMP and then transferred to the acceptor end of tRNA(Pro). In Xanthobacter autotrophicus (strain ATCC BAA-1158 / Py2), this protein is Proline--tRNA ligase.